Reading from the N-terminus, the 620-residue chain is Proline--tRNA ligase (620 aa).

The protein belongs to the class-II aminoacyl-tRNA synthetase family. ProS type 1 subfamily. Homodimer.

It is found in the cytoplasm. It carries out the reaction tRNA(Pro) + L-proline + ATP = L-prolyl-tRNA(Pro) + AMP + diphosphate. Its function is as follows. Catalyzes the attachment of proline to tRNA(Pro) in a two-step reaction: proline is first activated by ATP to form Pro-AMP and then transferred to the acceptor end of tRNA(Pro). As ProRS can inadvertently accommodate and process non-cognate amino acids such as alanine and cysteine, to avoid such errors it has two additional distinct editing activities against alanine. One activity is designated as 'pretransfer' editing and involves the tRNA(Pro)-independent hydrolysis of activated Ala-AMP. The other activity is designated 'posttransfer' editing and involves deacylation of mischarged Ala-tRNA(Pro). The misacylated Cys-tRNA(Pro) is not edited by ProRS. The chain is Proline--tRNA ligase from Streptococcus suis (strain 98HAH33).